The chain runs to 287 residues: Urease accessory protein UreD (287 aa).

It belongs to the UreD family. As to quaternary structure, ureD, UreF and UreG form a complex that acts as a GTP-hydrolysis-dependent molecular chaperone, activating the urease apoprotein by helping to assemble the nickel containing metallocenter of UreC. The UreE protein probably delivers the nickel.

The protein resides in the cytoplasm. Its function is as follows. Required for maturation of urease via the functional incorporation of the urease nickel metallocenter. The chain is Urease accessory protein UreD from Ureaplasma parvum serovar 3 (strain ATCC 27815 / 27 / NCTC 11736).